We begin with the raw amino-acid sequence, 505 residues long: Deoxyguanosinetriphosphate triphosphohydrolase (505 aa).

Residues 66-273 form the HD domain; that stretch reads RLTHSMEVQQ…MEAADDISYC (208 aa).

It belongs to the dGTPase family. Type 1 subfamily. As to quaternary structure, homotetramer. Requires Mg(2+) as cofactor.

It carries out the reaction dGTP + H2O = 2'-deoxyguanosine + triphosphate + H(+). With respect to regulation, inhibited by the action of reducing agents such as dithiothreitol and 2-mercaptoethanol. Functionally, dGTPase preferentially hydrolyzes dGTP over the other canonical NTPs. The sequence is that of Deoxyguanosinetriphosphate triphosphohydrolase from Shigella boydii.